The chain runs to 304 residues: Murein tetrapeptide carboxypeptidase (304 aa).

The active-site Nucleophile is the Ser-106. Catalysis depends on charge relay system residues Glu-200 and His-270.

The protein belongs to the peptidase S66 family.

The protein resides in the cytoplasm. The enzyme catalyses N-acetyl-D-glucosaminyl-N-acetylmuramoyl-L-alanyl-meso-2,6-diaminoheptanedioyl-D-alanine + H2O = N-acetyl-D-glucosaminyl-N-acetylmuramoyl-L-alanyl-meso-2,6-diaminoheptanedioate + D-alanine. It functions in the pathway cell wall biogenesis; peptidoglycan recycling. Its activity is regulated as follows. Inhibited by beta-lactams containing a D-amino acid side chain. In terms of biological role, releases the terminal D-alanine residue from the cytoplasmic tetrapeptide recycling product L-Ala-gamma-D-Glu-meso-Dap-D-Ala. To a lesser extent, can also cleave D-Ala from murein derivatives containing the tetrapeptide, i.e. MurNAc-tetrapeptide, UDP-MurNAc-tetrapeptide, GlcNAc-MurNAc-tetrapeptide, and GlcNAc-anhMurNAc-tetrapeptide. Does not act on murein sacculi or cross-linked muropeptides. The tripeptides produced by the LcdA reaction can then be reused as peptidoglycan building blocks; LcdA is thereby involved in murein recycling. Is also essential for viability during stationary phase. The sequence is that of Murein tetrapeptide carboxypeptidase (ldcA) from Escherichia coli (strain K12).